The sequence spans 222 residues: Lipid A 4'-phosphatase (222 aa).

The Cytoplasmic portion of the chain corresponds to 1-3 (MAR). The helical transmembrane segment at 4–24 (FHIILGLVVCFFAWIFFLIFP) threads the bilayer. Topologically, residues 25–58 (NLDIQFAGHFYNSSAHQFIGGYDGFLGFLHWFAR) are periplasmic. Residues 59–79 (FFPIFFSIIVILFLLGSLFID) form a helical membrane-spanning segment. Residues 80 to 87 (KFKIKYRK) are Cytoplasmic-facing. Residues 88–108 (AIFFIAVCLWIGPGLVVNYVF) form a helical membrane-spanning segment. The Periplasmic segment spans residues 109–144 (KDHWGRPRPVMVEQFNGDKIFQPPFVISSQCDKNCS). The helical transmembrane segment at 145 to 165 (FVCGDASMGFWLFAFMPLLAT) threads the bilayer. Over 166-169 (RKKK) the chain is Cytoplasmic. A helical membrane pass occupies residues 170–190 (LVAFIAAVVAGGGLGLMRMSQ). The Periplasmic portion of the chain corresponds to 191–193 (GGH). The helical transmembrane segment at 194 to 214 (FFSDVVFCGIFVYISTWVVYA) threads the bilayer. The Cytoplasmic portion of the chain corresponds to 215 to 222 (LMYRKKEY).

Belongs to the lipid A LpxF 4'-phosphatase family.

The protein localises to the cell inner membrane. It functions in the pathway bacterial outer membrane biogenesis; LPS lipid A biosynthesis. Functionally, removes the 4'-phosphate moiety from lipid IV(A) (a tetraacylated precursor of lipid A) and from pentaacylated lipid A, but not from hexaacylated lipid A (as is found in E.coli). Does not dephosphorylate phosphatidic acid, phosphatidylglycerophosphate, or the 1-phosphate group of lipid A and lipid A precursors. Its expression in E.coli confers resistance to the cationic antimicrobial peptide (CAMP) polymyxin B. Plays a critical role in the ability of the bacteria to avoid the host's innate immune system, especially the bactericidal action of CAMPs, although whether it is CAMP-sensitivity or increased sensitivity to the immune system is not clear. This Francisella tularensis subsp. novicida (strain U112) protein is Lipid A 4'-phosphatase.